The sequence spans 557 residues: Probable protein kinase UbiB (557 aa).

The 389-residue stretch at 121 to 509 (AFDTTPLASA…RKLQTRVVTA (389 aa)) folds into the Protein kinase domain. ATP contacts are provided by residues 127-135 (LASASIAQV) and lysine 154. The active-site Proton acceptor is aspartate 289. Helical transmembrane passes span 506-526 (VVTA…YGLH) and 535-555 (VPVW…IAWL).

The protein belongs to the ABC1 family. UbiB subfamily.

It is found in the cell inner membrane. It functions in the pathway cofactor biosynthesis; ubiquinone biosynthesis [regulation]. Its function is as follows. Is probably a protein kinase regulator of UbiI activity which is involved in aerobic coenzyme Q (ubiquinone) biosynthesis. The protein is Probable protein kinase UbiB of Xanthomonas campestris pv. campestris (strain B100).